Here is a 423-residue protein sequence, read N- to C-terminus: Imidazolonepropionase (423 aa).

His-78 and His-80 together coordinate Fe(3+). 2 residues coordinate Zn(2+): His-78 and His-80. Arg-87, Tyr-150, and His-183 together coordinate 4-imidazolone-5-propanoate. Tyr-150 lines the N-formimidoyl-L-glutamate pocket. A Fe(3+)-binding site is contributed by His-247. His-247 is a Zn(2+) binding site. Glu-250 contributes to the 4-imidazolone-5-propanoate binding site. Residue Asp-322 participates in Fe(3+) binding. Asp-322 is a binding site for Zn(2+). Positions 324 and 326 each coordinate N-formimidoyl-L-glutamate. Ser-327 provides a ligand contact to 4-imidazolone-5-propanoate.

The protein belongs to the metallo-dependent hydrolases superfamily. HutI family. Zn(2+) serves as cofactor. It depends on Fe(3+) as a cofactor.

The protein resides in the cytoplasm. The enzyme catalyses 4-imidazolone-5-propanoate + H2O = N-formimidoyl-L-glutamate. Its pathway is amino-acid degradation; L-histidine degradation into L-glutamate; N-formimidoyl-L-glutamate from L-histidine: step 3/3. Its function is as follows. Catalyzes the hydrolytic cleavage of the carbon-nitrogen bond in imidazolone-5-propanoate to yield N-formimidoyl-L-glutamate. It is the third step in the universal histidine degradation pathway. This is Imidazolonepropionase from Bacillus mycoides (strain KBAB4) (Bacillus weihenstephanensis).